The primary structure comprises 359 residues: Peptide chain release factor 1 (359 aa).

An N5-methylglutamine modification is found at Gln236.

This sequence belongs to the prokaryotic/mitochondrial release factor family. Methylated by PrmC. Methylation increases the termination efficiency of RF1.

The protein resides in the cytoplasm. Its function is as follows. Peptide chain release factor 1 directs the termination of translation in response to the peptide chain termination codons UAG and UAA. This chain is Peptide chain release factor 1, found in Streptococcus agalactiae serotype V (strain ATCC BAA-611 / 2603 V/R).